The chain runs to 71 residues: Small ribosomal subunit protein bS21 (71 aa).

The protein belongs to the bacterial ribosomal protein bS21 family.

This is Small ribosomal subunit protein bS21 from Shewanella woodyi (strain ATCC 51908 / MS32).